Reading from the N-terminus, the 447-residue chain is MDEEYDVIVLGTGLTECILSGIMSVNGKKVLHMDRNPYYGGESSSITPLEELYKRFQLLEGPPETMGRGRDWNVDLIPKFLMANGQLVKMLLYTEVTRYLDFKVVEGSFVYKGGKIYKVPSTETEALASNLMGMFEKRRFRKFLVFVANFDENDPKTFEGVDPQNTSMRDVYRKFDLGQDVIDFTGHALALYRTDDYLDQPCLETINRIKLYSESLARYGKSPYLYPLYGLGELPQGFARLSAIYGGTYMLNKPVDDIIMENGKVVGVKSEGEVARCKQLICDPSYVPDRVRKAGQVIRIICILSHPIKNTNDANSCQIIIPQNQVNRKSDIYVCMISYAHNVAAQGKYIAIASTTVETTDPEKEVEPALELLEPIDQKFVAISDLYEPIDDGSESQVFCSCSYDATTHFETTCNDIKDIYKRMAGSAFDFENMKRKQNDVFGEADQ.

At Ser427 the chain carries Phosphoserine.

This sequence belongs to the Rab GDI family. As to quaternary structure, interacts with RHOH. Interacts with the non-phosphorylated forms of RAB1A, RAB3A, RAB5A, RAB5B, RAB5C, RAB8A, RAB8B, RAB10, RAB12, RAB35, and RAB43. Interacts with RAB3A.

It is found in the cytoplasm. The protein resides in the golgi apparatus. Its subcellular location is the trans-Golgi network. Its function is as follows. Regulates the GDP/GTP exchange reaction of most Rab proteins by inhibiting the dissociation of GDP from them, and the subsequent binding of GTP to them. Promotes the dissociation of GDP-bound Rab proteins from the membrane and inhibits their activation. Promotes the dissociation of RAB1A, RAB3A, RAB5A and RAB10 from membranes. In Bos taurus (Bovine), this protein is Rab GDP dissociation inhibitor alpha (GDI1).